The primary structure comprises 116 residues: Large ribosomal subunit protein bL19 (116 aa).

It belongs to the bacterial ribosomal protein bL19 family.

Its function is as follows. This protein is located at the 30S-50S ribosomal subunit interface and may play a role in the structure and function of the aminoacyl-tRNA binding site. The protein is Large ribosomal subunit protein bL19 of Blochmanniella pennsylvanica (strain BPEN).